A 1759-amino-acid chain; its full sequence is Collagen alpha-1(IV) chain (1759 aa).

Residues 1–20 (MSRLSLLGLTAAVVLLSSFC) form the signal peptide. Positions 21–194 (QDRIHVDAAA…PGNSGYPGLK (174 aa)) are cleaved as a propeptide — N-terminal propeptide (7S domain). Disordered stretches follow at residues 51–245 (PGFG…GSYP), 269–415 (KGRD…GIDG), 548–596 (AGDP…PGLP), 618–650 (PAGI…GGPG), 666–720 (IDGK…RGIP), and 787–1522 (RGQQ…GTPG). 3 stretches are compositionally biased toward low complexity: residues 104–116 (HPGL…LPGL), 140–153 (PPGQ…PGRP), and 278–293 (PGML…PGLK). Residues 195 to 1530 (GAKGDPGPYG…PGYPGSPGGW (1336 aa)) form a triple-helical region region. Composition is skewed to gly residues over residues 324-345 (GEQG…GEPG), 360-370 (GPLGEGTGEAG), and 379-388 (GVQGGKGLPG). Low complexity-rich tracts occupy residues 399–411 (RGPV…PGQP) and 574–595 (MPGA…SPGL). Low complexity predominate over residues 833 to 848 (YPGPNGDAGAAGLPGP). The span at 904-913 (GQDGGPGYSG) shows a compositional bias: gly residues. Composition is skewed to low complexity over residues 1037–1047 (YPGQPGDVGYP), 1219–1232 (ENGD…DGQP), 1247–1271 (PGRD…PGQD), and 1281–1309 (QDGY…YGMP). The span at 1310 to 1319 (GLPGGPGESG) shows a compositional bias: gly residues. The span at 1341–1357 (LPGAPGVPGVEGVPGLE) shows a compositional bias: low complexity. Residues 1410 to 1422 (PRGDDGFPGRDGL) are compositionally biased toward basic and acidic residues. Low complexity-rich tracts occupy residues 1423-1437 (DGLP…LPGP) and 1472-1482 (PPGKAGYPGAP). Residues 1495-1504 (GMPGHGGDQG) show a composition bias toward gly residues. Residues 1535 to 1759 (GFTFAKHSQT…SRCQVCLKNR (225 aa)) enclose the Collagen IV NC1 domain. Cystine bridges form between C1550–C1641, C1583–C1638, C1595–C1601, C1660–C1755, C1694–C1752, and C1706–C1712. M1623 is covalently cross-linked (S-Lysyl-methionine sulfilimine (Met-Lys) (interchain with K-1741)). K1741 is covalently cross-linked (S-Lysyl-methionine sulfilimine (Lys-Met) (interchain with M-1623)).

Belongs to the type IV collagen family. As to quaternary structure, trimers of two alpha 1(IV) and one alpha 2(IV) chain. Type IV collagen forms a mesh-like network linked through intermolecular interactions between 7S domains and between NC1 domains. In terms of processing, prolines at the third position of the tripeptide repeating unit (G-X-Y) are hydroxylated in some or all of the chains. Type IV collagens contain numerous cysteine residues which are involved in inter- and intramolecular disulfide bonding. 12 of these, located in the NC1 domain, are conserved in all known type IV collagens. Post-translationally, the trimeric structure of the NC1 domains is stabilized by covalent bonds between Lys and Met residues.

The protein localises to the secreted. Its subcellular location is the extracellular space. It is found in the extracellular matrix. The protein resides in the basement membrane. Functionally, collagen type IV is specific for basement membranes. Required to restrict presynaptic growth at the neuromuscular junctions (NMJ) in late larval stage and in adult motor neurons. May play a role in axon regeneration in embryos following injury in D-type motor neurons. The sequence is that of Collagen alpha-1(IV) chain from Caenorhabditis elegans.